Reading from the N-terminus, the 183-residue chain is Threonylcarbamoyl-AMP synthase (183 aa).

The 183-residue stretch at 1–183 (MNFTEIAEKL…LLTDQLIREG (183 aa)) folds into the YrdC-like domain.

Belongs to the SUA5 family. TsaC subfamily.

It is found in the cytoplasm. The catalysed reaction is L-threonine + hydrogencarbonate + ATP = L-threonylcarbamoyladenylate + diphosphate + H2O. Functionally, required for the formation of a threonylcarbamoyl group on adenosine at position 37 (t(6)A37) in tRNAs that read codons beginning with adenine. Catalyzes the conversion of L-threonine, HCO(3)(-)/CO(2) and ATP to give threonylcarbamoyl-AMP (TC-AMP) as the acyladenylate intermediate, with the release of diphosphate. The sequence is that of Threonylcarbamoyl-AMP synthase from Actinobacillus succinogenes (strain ATCC 55618 / DSM 22257 / CCUG 43843 / 130Z).